Consider the following 240-residue polypeptide: Probable transcriptional regulatory protein Hac_0344 (240 aa).

This sequence belongs to the TACO1 family.

Its subcellular location is the cytoplasm. This Helicobacter acinonychis (strain Sheeba) protein is Probable transcriptional regulatory protein Hac_0344.